The primary structure comprises 1584 residues: MAVATRLPFIPPEATSQIIGGDEDLIDLSQEDVVSDNDDRGNASDVESEDGVKRWTVNPEPKPKKISAKKLADTAAFNSWIEEHQETLARDQRKAAIEAARVAGVDVLPAIGFDSERIITSPREYQVELFERAKQQNTIAVLDTGSGKTLIAAMLLRWVITGELEDREKGLPRRIAFFLVDKVALVFQQHSFLTKNLDFPMEKLCGEMVEGVESKAFWKEALEQNEVVVCTAEILSTALHHSWIRMDQINLLIFDEAHHTKKDHPYARIIKNFYIDEQLERRPRILGLTASPVDAKVDPRRAAAELEALLHSQIATAADPAALQHTICKPKTELVVEYVRGRPDSETVLNKQLRKLVGGQELFKKPLNFTTSAASKLGTWCADRYWQLFFKQEDIVKLESRTERDLMKVAALDEITEKHVKQVREAHELVNAHTFSPAALDPTMLSSKVIMLVRILRDQFERGVGAQRCIIFVRQRNTAMLLADLLQQPEIKSHIPSIAAEVLVGGGTTGSSYVNAKINFQQQNRIIRKFKLGEINCLFATSVAEEGLDIPDCNIVIRFDLYDTLIQCIQSRGRARRPDSRYIQMIEKGNYEHHSRILRAKGAEDVLRKFCEALPEDRKLTGNHMNLDYLLRKEKGKRQYTVPDTGAKLSYMQSLVCLANFTATLPHPPETSLSPEYYITTVPGGFQCEVVMPDASPIKSAVGKVHLSKGVAKCAAAFELCLALLKAGHLDNHLQSVFTKQLPEMRNARLAVSSKKKTEYAMRLKPELWSVRGVVTQLFATAFVLENPDTLGRSSRPLLLLSRSALPEVASFPLFFGTKRFSKVRCVPIPGSVQADDTLVEQLTRFTLKAFMDVFSKEYEATAVNLPYFLSPMDGGHGFDFRLAKSPAHLIDRKALAYVSENEKVPYTFLEPDDFFQDKFVVDPYDGARKFFTHHRRHDMKPTDPVPDGIVAPNHRAWRGLGTTHDILNYSNSLWSKSRGFMIFQADQPVVEAALISTRRDFLDDTLRDEDVEPQQCFLILEPMRISPIPADVVAMLLCFPSIIHRVESNLVALDACKLLGLDLRPDLALEAFTKDSDNSDEHDAEKENFQTGMGDNYERLEFLGDSFLKMATTIAIYTLIPDKGEFEYHVERMLLICNKNLFNNALEIGLEEYIRSMSFNRRQWYPEGLILKKGKSKDARQRHVLADKSIADVCEALIGAAYLTGQEKGSFDMAIKAVTAMVKDKKHRMISYGDYYAVYQKPTWQTESANSAQRDMAKKFSERMGYKFKHPRLLRAAFQHPTYPSLYERLPSYQRLEFLGDALFDMVAVDYLFRKFPAADPQWLTEHKMAMVSNQFLCCLSFHLGFNKCIATMSPSILKDIAEYVTEIEEALETAKQEAINAGKTADEYSRDYWVHITHASRLPKCLSDVVEAYIGAIFVDSEYDYSVVQNFFNMHVLPFFEDMHLYDTFANKHPVTFVANMMAHKFRCNEWRSFAKELDTDVTEGRGGRGGNGAVAGEISEINPPKVVSALLVHGKTVVHAVAASGRYAKSAMAKKAIKLLEGMSVEEFRERLGCNCKGVPMEVDGGVPEADVDGEVHGTAV.

A disordered region spans residues 31–60 (EDVVSDNDDRGNASDVESEDGVKRWTVNPE). The region spanning 129–310 (LFERAKQQNT…RAAAELEALL (182 aa)) is the Helicase ATP-binding domain. Residue 142 to 149 (LDTGSGKT) coordinates ATP. The short motif at 255–258 (DEAH) is the DEAH box element. One can recognise a Helicase C-terminal domain in the interval 448–621 (KVIMLVRILR…EALPEDRKLT (174 aa)). The region spanning 654–744 (SLVCLANFTA…QSVFTKQLPE (91 aa)) is the Dicer dsRNA-binding fold domain. In terms of domain architecture, PAZ spans 894-1028 (KALAYVSENE…LILEPMRISP (135 aa)). RNase III domains are found at residues 1052 to 1207 (VALD…LTGQ) and 1258 to 1424 (AKKF…VDSE). Mg(2+)-binding residues include Glu1298, Asp1410, and Glu1413. In terms of domain architecture, DRBM spans 1458–1545 (TFVANMMAHK…AKKAIKLLEG (88 aa)). Positions 1470, 1516, 1557, and 1559 each coordinate Zn(2+).

It belongs to the helicase family. Dicer subfamily. Mg(2+) serves as cofactor. Requires Mn(2+) as cofactor.

Dicer-like endonuclease involved in cleaving double-stranded RNA in the RNA interference (RNAi) pathway. Produces 21 to 25 bp dsRNAs (siRNAs) which target the selective destruction of homologous RNAs leading to sequence-specific suppression of gene expression, called post-transcriptional gene silencing (PTGS). Part of a broad host defense response against viral infection and transposons. Controls the expression of the non-LTR retrotransposon Tad in the African strain, Adiomopoume. The sequence is that of Dicer-like protein 1 (dcl-1) from Neurospora crassa (strain ATCC 24698 / 74-OR23-1A / CBS 708.71 / DSM 1257 / FGSC 987).